The following is a 409-amino-acid chain: Arginine deiminase (409 aa).

Cysteine 399 serves as the catalytic Amidino-cysteine intermediate.

This sequence belongs to the arginine deiminase family.

Its subcellular location is the cytoplasm. It catalyses the reaction L-arginine + H2O = L-citrulline + NH4(+). The protein operates within amino-acid degradation; L-arginine degradation via ADI pathway; carbamoyl phosphate from L-arginine: step 1/2. The chain is Arginine deiminase from Streptococcus gordonii (strain Challis / ATCC 35105 / BCRC 15272 / CH1 / DL1 / V288).